Here is a 429-residue protein sequence, read N- to C-terminus: Glutamate-1-semialdehyde 2,1-aminomutase 1 (429 aa).

The residue at position 267 (Lys267) is an N6-(pyridoxal phosphate)lysine.

This sequence belongs to the class-III pyridoxal-phosphate-dependent aminotransferase family. HemL subfamily. Homodimer. Pyridoxal 5'-phosphate serves as cofactor.

The protein localises to the cytoplasm. It carries out the reaction (S)-4-amino-5-oxopentanoate = 5-aminolevulinate. Its pathway is porphyrin-containing compound metabolism; protoporphyrin-IX biosynthesis; 5-aminolevulinate from L-glutamyl-tRNA(Glu): step 2/2. The sequence is that of Glutamate-1-semialdehyde 2,1-aminomutase 1 from Staphylococcus carnosus (strain TM300).